We begin with the raw amino-acid sequence, 290 residues long: ATP synthase gamma chain (290 aa).

This sequence belongs to the ATPase gamma chain family. F-type ATPases have 2 components, CF(1) - the catalytic core - and CF(0) - the membrane proton channel. CF(1) has five subunits: alpha(3), beta(3), gamma(1), delta(1), epsilon(1). CF(0) has three main subunits: a, b and c.

It is found in the cell membrane. Produces ATP from ADP in the presence of a proton gradient across the membrane. The gamma chain is believed to be important in regulating ATPase activity and the flow of protons through the CF(0) complex. This chain is ATP synthase gamma chain, found in Buchnera aphidicola subsp. Schlechtendalia chinensis.